The sequence spans 445 residues: tRNA-2-methylthio-N(6)-dimethylallyladenosine synthase (445 aa).

One can recognise an MTTase N-terminal domain in the interval 3 to 124 (KNLYIKTYGC…LPELISKIVR (122 aa)). 6 residues coordinate [4Fe-4S] cluster: cysteine 12, cysteine 48, cysteine 87, cysteine 162, cysteine 166, and cysteine 169. One can recognise a Radical SAM core domain in the interval 148–380 (YPQGASSFIS…QKELMDQQLA (233 aa)). The TRAM domain maps to 383 to 445 (ESCVGSTIKV…SLNSLTGEIL (63 aa)).

It belongs to the methylthiotransferase family. MiaB subfamily. In terms of assembly, monomer. It depends on [4Fe-4S] cluster as a cofactor.

The protein localises to the cytoplasm. The catalysed reaction is N(6)-dimethylallyladenosine(37) in tRNA + (sulfur carrier)-SH + AH2 + 2 S-adenosyl-L-methionine = 2-methylsulfanyl-N(6)-dimethylallyladenosine(37) in tRNA + (sulfur carrier)-H + 5'-deoxyadenosine + L-methionine + A + S-adenosyl-L-homocysteine + 2 H(+). In terms of biological role, catalyzes the methylthiolation of N6-(dimethylallyl)adenosine (i(6)A), leading to the formation of 2-methylthio-N6-(dimethylallyl)adenosine (ms(2)i(6)A) at position 37 in tRNAs that read codons beginning with uridine. The sequence is that of tRNA-2-methylthio-N(6)-dimethylallyladenosine synthase from Rickettsia akari (strain Hartford).